We begin with the raw amino-acid sequence, 467 residues long: Pup--protein ligase (467 aa).

A Mg(2+)-binding site is contributed by Glu12. Arg56 serves as a coordination point for ATP. Tyr58 lines the Mg(2+) pocket. Residue Asp60 is the Proton acceptor of the active site. Glu66 contributes to the Mg(2+) binding site. Residues Thr69 and Trp431 each contribute to the ATP site.

It belongs to the Pup ligase/Pup deamidase family. Pup-conjugating enzyme subfamily.

The catalysed reaction is ATP + [prokaryotic ubiquitin-like protein]-L-glutamate + [protein]-L-lysine = ADP + phosphate + N(6)-([prokaryotic ubiquitin-like protein]-gamma-L-glutamyl)-[protein]-L-lysine.. Its pathway is protein degradation; proteasomal Pup-dependent pathway. It functions in the pathway protein modification; protein pupylation. Functionally, catalyzes the covalent attachment of the prokaryotic ubiquitin-like protein modifier Pup to the proteasomal substrate proteins, thereby targeting them for proteasomal degradation. This tagging system is termed pupylation. The ligation reaction involves the side-chain carboxylate of the C-terminal glutamate of Pup and the side-chain amino group of a substrate lysine. In Corynebacterium jeikeium (strain K411), this protein is Pup--protein ligase.